A 103-amino-acid chain; its full sequence is Small ubiquitin-related modifier 2 (103 aa).

One can recognise a Ubiquitin-like domain in the interval 15–92; sequence AHINLKVKGQ…IDAMLHQTGG (78 aa). Glycine 92 is covalently cross-linked (Glycyl lysine isopeptide (Gly-Lys) (interchain with K-? in acceptor proteins)).

The protein belongs to the ubiquitin family. SUMO subfamily. As to quaternary structure, interacts with SAE2, SCE1, SIZ1 and MMS21. Interacts with HSFA2. Covalently attached to ABI5, FLD, GTE3, HSFA2 and ICE1.

The protein localises to the nucleus. Its subcellular location is the cytoplasm. Functionally, ubiquitin-like protein which can be covalently attached to target lysines as a monomer. Does not seem to be involved in protein degradation and may function as an antagonist of ubiquitin in the degradation process. Required for the massive protein sumoylation in the nucleus induced by heat shock and controlled by SIZ1. The sequence is that of Small ubiquitin-related modifier 2 from Arabidopsis thaliana (Mouse-ear cress).